The following is a 470-amino-acid chain: Glutamate--tRNA ligase (470 aa).

Residues 12–22 carry the 'HIGH' region motif; the sequence is PSPTGIFHVGG. Positions 103, 105, 125, and 127 each coordinate Zn(2+). Positions 236 to 240 match the 'KMSKS' region motif; that stretch reads KLSKR. K239 contacts ATP.

Belongs to the class-I aminoacyl-tRNA synthetase family. Glutamate--tRNA ligase type 1 subfamily. As to quaternary structure, monomer. Requires Zn(2+) as cofactor.

It localises to the cytoplasm. It catalyses the reaction tRNA(Glu) + L-glutamate + ATP = L-glutamyl-tRNA(Glu) + AMP + diphosphate. Functionally, catalyzes the attachment of glutamate to tRNA(Glu) in a two-step reaction: glutamate is first activated by ATP to form Glu-AMP and then transferred to the acceptor end of tRNA(Glu). The protein is Glutamate--tRNA ligase of Frankia casuarinae (strain DSM 45818 / CECT 9043 / HFP020203 / CcI3).